The chain runs to 470 residues: Histidine--tRNA ligase (470 aa).

It belongs to the class-II aminoacyl-tRNA synthetase family. In terms of assembly, homodimer.

It is found in the cytoplasm. The catalysed reaction is tRNA(His) + L-histidine + ATP = L-histidyl-tRNA(His) + AMP + diphosphate + H(+). This is Histidine--tRNA ligase from Xanthomonas oryzae pv. oryzae (strain PXO99A).